We begin with the raw amino-acid sequence, 249 residues long: 5'-nucleotidase SurE (249 aa).

A divalent metal cation-binding residues include Asp8, Asp9, Ser39, and Asn91.

Belongs to the SurE nucleotidase family. It depends on a divalent metal cation as a cofactor.

It is found in the cytoplasm. The catalysed reaction is a ribonucleoside 5'-phosphate + H2O = a ribonucleoside + phosphate. Functionally, nucleotidase that shows phosphatase activity on nucleoside 5'-monophosphates. The sequence is that of 5'-nucleotidase SurE from Pseudomonas syringae pv. tomato (strain ATCC BAA-871 / DC3000).